We begin with the raw amino-acid sequence, 292 residues long: AKT-interacting protein homolog B (292 aa).

A disordered region spans residues 1-44 (MNPFWNMPSASVRKRSDNDEKIATADQKISPARSSSAKKQLPSI). The segment covering 14-23 (KRSDNDEKIA) has biased composition (basic and acidic residues). Positions 75-223 (YLEYSLLAEF…VVDSVKLCNS (149 aa)) constitute a UBC core domain.

It belongs to the ubiquitin-conjugating enzyme family. FTS subfamily.

The protein resides in the cytoplasm. Its subcellular location is the cell membrane. May function to promote vesicle trafficking and/or fusion. May also regulate apoptosis. This chain is AKT-interacting protein homolog B (aktip-b), found in Xenopus laevis (African clawed frog).